Consider the following 1707-residue polypeptide: MSISVSSQRVAVSNLYTNGSEESVKAIKELKSKRLLETETRLDGLFDYYIPDTLREILTGYGMEFSVHSFQGHAHPVSKMIENHMLYRVAPNYFSSNTLVVSCKESKIKRLRLKNANNRNLNFTQYNRLVHANHHHRYENAFRELDVGNLTNLINKEDQSECIFIHDEVQYWSLDEMQRFLGSLSKVDRVVYSIIYPSEVEAGYSQSLFPEAYTFDLKDRRLVWYPDGKAEGAYTQPVNPWLLRCSKTEDSKGRSWTITKLQTIGAHHLFSAIKGSYLTEESYKYDNFTIINPNDVLKGKRGGKPLYLRARMIKPTLLYLLALKKSDSNSAVAKLRMLSSREENMDEALFVAQLAKQIKDTALYDKMGNPNLRSILSESFYDIAGSLFTRLFNRPEYDARCLEKFIRSCETTEIHVERRYMEGIRRGASFKVQNVMDWVEDDSANALSEVNFLDISWNDRVSEPYGIECIHGEGSRIRVPLSRILRAHELIAGVQTDVEINFPRYVCSSRALIHFRQYLIKLGRFSFMESRAIKDIEDIQAGLEEGVITEEEAELRLLPTTKPKITEIHMDDDTPGTSGESDVEKFKSVRSLCREEIYSEKLKGREVAFYSRHSKEYKYNGGSHRSLGWDEALNELTQELGLDDSYDHCLIQRYTAGGSIGFHADDEPCYLPGGSVVTVNLHGDATFEVKENQSGKIEKKELHDGDVYVMGPGMQQTHKHRVTSHTDGRCSITLRNKTVDYEARKGDEDSEYEEDKAELDEGIDYLQKNQGNMCSLKAFADHMQLSTPSVIAIVNGASPQTLREIEDGGYSLATLVNLSKALDFPIAIHGERGYAETPGSYRRLHLKITSGHVEPFEGVTSKGGFREAMLLGDGVGVGHFRVDKAKADRLAQSFYNGNTGVLLGKYNKGKMHTGEIEEPKEVLTAFGFAGSGKSHWCQTILKHCSVEKVLVISPRKVLRDDWVAKISKKHRVVTFEVAFMDDYGCKDIVIDEIGLLPPGYIDLVIAAHQPRTLVLLGDPLQSTYHSKRDNVVLEASQEDVFNRVRGKLPYLCYSHRLPRNCKLFEIECMGAESEKRVVYRSNRLKDEPTICATRAMKEEKGSGWYTVSETQGLSFKSCLIYLDEHWAKKEDEDVMVALTRSRGEIGIHVTPALKKKLITNAKSTLLKKVLKGETYRRSEIVAMVRKHIPETTVLFEESRLAETVDYEARLAGDPYLKSLLALYDEIEMEDIEIEEPVTLEPTKTHLALSTKMNELAPFDLKAKEHREQHTEAGRTEQIDENGYQGEVGDPMTHKALYLRHTSDDTATFMMSVKKRLRFRNYEANRRKYKTCHGIGHQMFSVFKDTYQLKEIDSLPELERCEMEFMKKRIEKSTGLIEKHAGRSDPDWPSNYLKIFLKQQTCTKMEKRGVDAKAGQTIACFAHSVLCRFGPILRQTEKALRELLPEKLMIYSQKKYMDLDKWAKTWVESMMGTDSDYEAFDRSQDEKVLDLEVEVLRFFLWPEDLIREYEELKLMMGCALGDLAVMRFSGEFGTFFFNTVCNMVFSCMRYHIDRNTPMCFAGDDMYSPGILRVKKDYEATLDQLTLKAKVHISEEPLFCGWRMSPFGIIKEPNLILDRWKIALRSGNLSLCLVNYAIEASFGYRLSEHLYDVNIDVDAQQELVREIVIKKHLLPKKISDLFSEDECERHSDGDEDFLSNDVARLYRIE.

The Alphavirus-like MT domain maps to 66-242 (SVHSFQGHAH…AYTQPVNPWL (177 aa)). Residues 645–738 (SYDHCLIQRY…RCSITLRNKT (94 aa)) enclose the Fe2OG dioxygenase domain. 3 residues coordinate Fe cation: H663, D665, and H720. Residue R729 coordinates 2-oxoglutarate. Residues 892-1051 (QSFYNGNTGV…NRVRGKLPYL (160 aa)) enclose the (+)RNA virus helicase ATP-binding domain. Residues 1052-1182 (CYSHRLPRNC…ETYRRSEIVA (131 aa)) enclose the (+)RNA virus helicase C-terminal domain. The region spanning 1469-1580 (MMGTDSDYEA…RVKKDYEATL (112 aa)) is the RdRp catalytic domain.

Belongs to the potexviruses/carlaviruses RNA replication protein family. The cofactor is Fe(2+).

It catalyses the reaction RNA(n) + a ribonucleoside 5'-triphosphate = RNA(n+1) + diphosphate. The catalysed reaction is ATP + H2O = ADP + phosphate + H(+). Functionally, RNA replication. The central part of this protein possibly functions as an ATP-binding helicase. This Grapevine virus A (isolate Is 151) (GVA) protein is RNA replication protein.